A 453-amino-acid chain; its full sequence is uncharacterized protein (453 aa).

The region spanning Leu5–Asn63 is the TRAM domain. [4Fe-4S] cluster-binding residues include Cys76, Cys82, Cys85, and Cys162. S-adenosyl-L-methionine-binding residues include Gln285, Tyr314, Glu335, and Asp383. Cys410 acts as the Nucleophile in catalysis.

It belongs to the class I-like SAM-binding methyltransferase superfamily. RNA M5U methyltransferase family.

This is an uncharacterized protein from Listeria monocytogenes serovar 1/2a (strain ATCC BAA-679 / EGD-e).